The sequence spans 371 residues: Peptide chain release factor 2 (371 aa).

Residue glutamine 247 is modified to N5-methylglutamine.

Belongs to the prokaryotic/mitochondrial release factor family. Methylated by PrmC. Methylation increases the termination efficiency of RF2.

It localises to the cytoplasm. In terms of biological role, peptide chain release factor 2 directs the termination of translation in response to the peptide chain termination codons UGA and UAA. This Caulobacter vibrioides (strain ATCC 19089 / CIP 103742 / CB 15) (Caulobacter crescentus) protein is Peptide chain release factor 2.